The primary structure comprises 228 residues: Demethylmenaquinone methyltransferase (228 aa).

S-adenosyl-L-methionine contacts are provided by residues T62, D80, 100–101, and S117; that span reads DA.

Belongs to the class I-like SAM-binding methyltransferase superfamily. MenG/UbiE family.

The catalysed reaction is a 2-demethylmenaquinol + S-adenosyl-L-methionine = a menaquinol + S-adenosyl-L-homocysteine + H(+). Its pathway is quinol/quinone metabolism; menaquinone biosynthesis; menaquinol from 1,4-dihydroxy-2-naphthoate: step 2/2. Functionally, methyltransferase required for the conversion of demethylmenaquinol (DMKH2) to menaquinol (MKH2). The chain is Demethylmenaquinone methyltransferase from Mycolicibacterium vanbaalenii (strain DSM 7251 / JCM 13017 / BCRC 16820 / KCTC 9966 / NRRL B-24157 / PYR-1) (Mycobacterium vanbaalenii).